Here is a 214-residue protein sequence, read N- to C-terminus: tRNA (guanine-N(7)-)-methyltransferase (214 aa).

4 residues coordinate S-adenosyl-L-methionine: D35, E60, N87, and D113. The active site involves D113. Substrate contacts are provided by K117 and D149.

The protein belongs to the class I-like SAM-binding methyltransferase superfamily. TrmB family.

The catalysed reaction is guanosine(46) in tRNA + S-adenosyl-L-methionine = N(7)-methylguanosine(46) in tRNA + S-adenosyl-L-homocysteine. Its pathway is tRNA modification; N(7)-methylguanine-tRNA biosynthesis. Catalyzes the formation of N(7)-methylguanine at position 46 (m7G46) in tRNA. The polypeptide is tRNA (guanine-N(7)-)-methyltransferase (Prochlorococcus marinus (strain NATL2A)).